Reading from the N-terminus, the 488-residue chain is DNA polymerase II small subunit (488 aa).

Belongs to the DNA polymerase delta/II small subunit family. As to quaternary structure, heterodimer of a large subunit and a small subunit.

The catalysed reaction is DNA(n) + a 2'-deoxyribonucleoside 5'-triphosphate = DNA(n+1) + diphosphate. It carries out the reaction Exonucleolytic cleavage in the 3'- to 5'-direction to yield nucleoside 5'-phosphates.. Its function is as follows. Possesses two activities: a DNA synthesis (polymerase) and an exonucleolytic activity that degrades single-stranded DNA in the 3' to 5' direction. Has a template-primer preference which is characteristic of a replicative DNA polymerase. The sequence is that of DNA polymerase II small subunit (polB) from Thermoplasma acidophilum (strain ATCC 25905 / DSM 1728 / JCM 9062 / NBRC 15155 / AMRC-C165).